A 523-amino-acid polypeptide reads, in one-letter code: DELLA protein RGL3 (523 aa).

Positions 1–28 (MKRSHQETSVEEEAPSMVEKLENGCGGG) are disordered. A DELLA motif motif is present at residues 34 to 38 (DEFLA). An LEXLE motif motif is present at residues 56–60 (LEQLE). The short motif at 78–82 (VHYNP) is the VHYNP motif element. One can recognise a GRAS domain in the interval 148–516 (VLIEETGVRL…KPLIAASAWK (369 aa)). Positions 155 to 209 (VRLVQALVACAEAVQLENLSLADALVKRVGLLAASQAGAMGKVATYFAEALARRI) are leucine repeat I (LRI). Residues 228 to 293 (QMNFYDSCPY…GGPPSFRLTG (66 aa)) form a VHIID region. The VHIID motif lies at 259 to 263 (VHVID). Positions 305–337 (ELGWKLAQLAQAIGVEFKFNGLTTERLSDLEPD) are leucine repeat II (LRII). Residues 348-437 (LVVNSVFELH…EVYLGRQILN (90 aa)) are PFYRE. The LXXLL motif signature appears at 356 to 360 (LHPVL). An SAW region spans residues 440-516 (ATEGSDRIER…KPLIAASAWK (77 aa)).

The protein belongs to the GRAS family. DELLA subfamily. As to quaternary structure, interacts directly with the GID2/SLY1 component of the SCF(GID2) complex, suggesting that it may be ubiquitinated. Interacts (via N-terminus) with GID1A, GID1B and GID1B (via N-terminus). Interacts with the BOI proteins BOI, BRG1, BRG2 and BRG3. Post-translationally, phosphorylated. In terms of processing, may be ubiquitinated. Expressed at very low level. Mainly expressed in germinating seeds and flowers and siliques. Not expressed in other tissues.

Its subcellular location is the nucleus. Probable transcriptional regulator that acts as a repressor of the gibberellin (GA) signaling pathway. No effect of the BOI proteins on its stability. Probably acts by participating in large multiprotein complexes that repress transcription of GA-inducible genes. Its activity may be regulated by phytohormones such as auxin and ethylene. This Arabidopsis thaliana (Mouse-ear cress) protein is DELLA protein RGL3 (RGL3).